Reading from the N-terminus, the 230-residue chain is Acyl-protein thioesterase 1 (230 aa).

Active-site charge relay system residues include Ser119, Asp174, and His208. An N6-acetyllysine modification is found at Lys224.

This sequence belongs to the AB hydrolase superfamily. AB hydrolase 2 family. In terms of assembly, homodimer.

Its subcellular location is the cytoplasm. The protein localises to the cell membrane. It localises to the nucleus membrane. The protein resides in the endoplasmic reticulum. The catalysed reaction is S-hexadecanoyl-L-cysteinyl-[protein] + H2O = L-cysteinyl-[protein] + hexadecanoate + H(+). It carries out the reaction 1-hexadecanoyl-sn-glycero-3-phosphocholine + H2O = sn-glycerol 3-phosphocholine + hexadecanoate + H(+). It catalyses the reaction a 1-(9Z-octadecenoyl)-2-acyl-sn-glycero-3-phosphocholine + H2O = a 2-acyl-sn-glycero-3-phosphocholine + (9Z)-octadecenoate + H(+). Functionally, acts as an acyl-protein thioesterase. Hydrolyzes fatty acids from S-acylated cysteine residues in proteins such as trimeric G alpha proteins or HRAS. Acts as a palmitoyl thioesterase that catalyzes depalmitoylation of proteins, such as ADRB2, KCNMA1 and SQSTM1. Acts as a negative regulator of autophagy by mediating palmitoylation of SQSTM1, decreasing affinity between SQSTM1 and ATG8 proteins and recruitment of ubiquitinated cargo proteins to autophagosomes. Acts as a lysophospholipase and hydrolyzes lysophosphatidylcholine (lyso-PC). Also hydrolyzes lysophosphatidylethanolamine (lyso-PE), lysophosphatidylinositol (lyso-PI) and lysophosphatidylserine (lyso-PS). Has much higher thioesterase activity than lysophospholipase activity. Contributes to the production of lysophosphatidic acid (LPA) during blood coagulation by recognizing and cleaving plasma phospholipids to generate lysophospholipids which in turn act as substrates for ENPP2 to produce LPA. The protein is Acyl-protein thioesterase 1 (LYPLA1) of Pongo abelii (Sumatran orangutan).